Reading from the N-terminus, the 183-residue chain is Holliday junction branch migration complex subunit RuvA (183 aa).

Positions 1–64 (MVVGIEGIIT…EDSNKFYGFL (64 aa)) are domain I. The interval 65–139 (DKDEQKMFEM…DTRTKLENVS (75 aa)) is domain II. Residue S139 is a region of interest, flexible linker. A domain III region spans residues 139–183 (SDDKSEALAALLTLGFKQEKIISVLASAQATGTSELIKEALKKLR).

It belongs to the RuvA family. As to quaternary structure, homotetramer. Forms an RuvA(8)-RuvB(12)-Holliday junction (HJ) complex. HJ DNA is sandwiched between 2 RuvA tetramers; dsDNA enters through RuvA and exits via RuvB. An RuvB hexamer assembles on each DNA strand where it exits the tetramer. Each RuvB hexamer is contacted by two RuvA subunits (via domain III) on 2 adjacent RuvB subunits; this complex drives branch migration. In the full resolvosome a probable DNA-RuvA(4)-RuvB(12)-RuvC(2) complex forms which resolves the HJ.

The protein resides in the cytoplasm. The RuvA-RuvB-RuvC complex processes Holliday junction (HJ) DNA during genetic recombination and DNA repair, while the RuvA-RuvB complex plays an important role in the rescue of blocked DNA replication forks via replication fork reversal (RFR). RuvA specifically binds to HJ cruciform DNA, conferring on it an open structure. The RuvB hexamer acts as an ATP-dependent pump, pulling dsDNA into and through the RuvAB complex. HJ branch migration allows RuvC to scan DNA until it finds its consensus sequence, where it cleaves and resolves the cruciform DNA. In Campylobacter jejuni subsp. doylei (strain ATCC BAA-1458 / RM4099 / 269.97), this protein is Holliday junction branch migration complex subunit RuvA.